Reading from the N-terminus, the 409-residue chain is 1-deoxy-D-xylulose 5-phosphate reductoisomerase (409 aa).

Thr5, Gly6, Ser7, Ile8, Gly31, Asn33, and Asn122 together coordinate NADPH. Lys123 provides a ligand contact to 1-deoxy-D-xylulose 5-phosphate. NADPH is bound at residue Glu124. Residue Asp148 participates in Mn(2+) binding. 4 residues coordinate 1-deoxy-D-xylulose 5-phosphate: Ser149, Glu150, Ser186, and His209. Glu150 lines the Mn(2+) pocket. NADPH is bound at residue Gly215. Ser222, Asn227, Lys228, and Glu231 together coordinate 1-deoxy-D-xylulose 5-phosphate. Glu231 serves as a coordination point for Mn(2+).

Belongs to the DXR family. It depends on Mg(2+) as a cofactor. Mn(2+) is required as a cofactor.

It carries out the reaction 2-C-methyl-D-erythritol 4-phosphate + NADP(+) = 1-deoxy-D-xylulose 5-phosphate + NADPH + H(+). It functions in the pathway isoprenoid biosynthesis; isopentenyl diphosphate biosynthesis via DXP pathway; isopentenyl diphosphate from 1-deoxy-D-xylulose 5-phosphate: step 1/6. In terms of biological role, catalyzes the NADPH-dependent rearrangement and reduction of 1-deoxy-D-xylulose-5-phosphate (DXP) to 2-C-methyl-D-erythritol 4-phosphate (MEP). The polypeptide is 1-deoxy-D-xylulose 5-phosphate reductoisomerase (Parasynechococcus marenigrum (strain WH8102)).